The chain runs to 426 residues: Dihydrofolate synthase/folylpolyglutamate synthase (426 aa).

58-61 lines the ATP pocket; the sequence is GKGS. S82 serves as a coordination point for Mg(2+). 121-124 is a 7,8-dihydropteroate binding site; sequence TRFE. Position 145 (E145) interacts with Mg(2+). 152-154 contacts 7,8-dihydropteroate; that stretch reads LDA. H172 serves as a coordination point for Mg(2+). 2 residues coordinate ATP: R289 and D302.

It belongs to the folylpolyglutamate synthase family. As to quaternary structure, monomer. It depends on Mg(2+) as a cofactor.

The enzyme catalyses 7,8-dihydropteroate + L-glutamate + ATP = 7,8-dihydrofolate + ADP + phosphate + H(+). It catalyses the reaction (6S)-5,6,7,8-tetrahydrofolyl-(gamma-L-Glu)(n) + L-glutamate + ATP = (6S)-5,6,7,8-tetrahydrofolyl-(gamma-L-Glu)(n+1) + ADP + phosphate + H(+). It carries out the reaction 10-formyltetrahydrofolyl-(gamma-L-Glu)(n) + L-glutamate + ATP = 10-formyltetrahydrofolyl-(gamma-L-Glu)(n+1) + ADP + phosphate + H(+). The catalysed reaction is (6R)-5,10-methylenetetrahydrofolyl-(gamma-L-Glu)(n) + L-glutamate + ATP = (6R)-5,10-methylenetetrahydrofolyl-(gamma-L-Glu)(n+1) + ADP + phosphate + H(+). It participates in cofactor biosynthesis; tetrahydrofolate biosynthesis; 7,8-dihydrofolate from 2-amino-4-hydroxy-6-hydroxymethyl-7,8-dihydropteridine diphosphate and 4-aminobenzoate: step 2/2. Its pathway is cofactor biosynthesis; tetrahydrofolylpolyglutamate biosynthesis. Functionally, functions in two distinct reactions of the de novo folate biosynthetic pathway. Catalyzes the addition of a glutamate residue to dihydropteroate (7,8-dihydropteroate or H2Pte) to form dihydrofolate (7,8-dihydrofolate monoglutamate or H2Pte-Glu). Also catalyzes successive additions of L-glutamate to tetrahydrofolate or 10-formyltetrahydrofolate or 5,10-methylenetetrahydrofolate, leading to folylpolyglutamate derivatives. This is Dihydrofolate synthase/folylpolyglutamate synthase (folC) from Buchnera aphidicola subsp. Baizongia pistaciae (strain Bp).